Consider the following 79-residue polypeptide: Protein S100-G (79 aa).

At Ser2 the chain carries N-acetylserine. EF-hand domains lie at 13-48 and 45-79; these read IFEKYAAKEGDPDQLSKDELKLLIQAEFPSLLKGPN and KGPNTLDDLFQELDKNGDGEVSFEEFQVLVKKISQ. Positions 26 and 31 each coordinate Ca(2+). Ser42 is subject to Phosphoserine. Residues Asp58, Asn60, Asp62, Glu64, and Glu69 each coordinate Ca(2+).

This sequence belongs to the S-100 family.

The protein is Protein S100-G (S100G) of Homo sapiens (Human).